We begin with the raw amino-acid sequence, 378 residues long: mRNA cap guanine-N(7) methyltransferase (378 aa).

An mRNA cap 0 methyltransferase domain is found at 24–331 (SRIFFMRNMN…MYLVFGFRKK (308 aa)). An mRNA-binding site is contributed by 33 to 34 (NN). Positions 37, 62, 84, 116, 138, and 143 each coordinate S-adenosyl-L-methionine. Composition is skewed to basic and acidic residues over residues 335–347 (EKNL…EIKK) and 356–378 (DTDK…PSHC). Residues 335–378 (EKNLESEAPEIKKVTPVPLNEDTDKTAEKNEERIEEKEENPSHC) form a disordered region.

The protein belongs to the class I-like SAM-binding methyltransferase superfamily. mRNA cap 0 methyltransferase family.

Its subcellular location is the nucleus. It carries out the reaction a 5'-end (5'-triphosphoguanosine)-ribonucleoside in mRNA + S-adenosyl-L-methionine = a 5'-end (N(7)-methyl 5'-triphosphoguanosine)-ribonucleoside in mRNA + S-adenosyl-L-homocysteine. Functionally, mRNA-capping methyltransferase that methylates the N7 position of the added guanosine to the 5'-cap structure of mRNAs. Binds RNA containing 5'-terminal GpppC. In Caenorhabditis briggsae, this protein is mRNA cap guanine-N(7) methyltransferase.